Reading from the N-terminus, the 473-residue chain is Photosystem II CP43 reaction center protein (473 aa).

The propeptide occupies methionine 1–glutamate 14. N-acetylthreonine is present on threonine 15. Threonine 15 is modified (phosphothreonine). The next 5 helical transmembrane spans lie at leucine 69–alanine 93, leucine 134–asparagine 155, lysine 178–threonine 200, lysine 255–serine 275, and tryptophan 291–alanine 312. Residue glutamate 367 participates in [CaMn4O5] cluster binding. Residues arginine 447–proline 471 traverse the membrane as a helical segment.

This sequence belongs to the PsbB/PsbC family. PsbC subfamily. In terms of assembly, PSII is composed of 1 copy each of membrane proteins PsbA, PsbB, PsbC, PsbD, PsbE, PsbF, PsbH, PsbI, PsbJ, PsbK, PsbL, PsbM, PsbT, PsbX, PsbY, PsbZ, Psb30/Ycf12, at least 3 peripheral proteins of the oxygen-evolving complex and a large number of cofactors. It forms dimeric complexes. Requires Binds multiple chlorophylls and provides some of the ligands for the Ca-4Mn-5O cluster of the oxygen-evolving complex. It may also provide a ligand for a Cl- that is required for oxygen evolution. PSII binds additional chlorophylls, carotenoids and specific lipids. as cofactor.

Its subcellular location is the plastid. The protein localises to the chloroplast thylakoid membrane. In terms of biological role, one of the components of the core complex of photosystem II (PSII). It binds chlorophyll and helps catalyze the primary light-induced photochemical processes of PSII. PSII is a light-driven water:plastoquinone oxidoreductase, using light energy to abstract electrons from H(2)O, generating O(2) and a proton gradient subsequently used for ATP formation. This Panax ginseng (Korean ginseng) protein is Photosystem II CP43 reaction center protein.